An 81-amino-acid chain; its full sequence is Styelin-D (81 aa).

An N-terminal signal peptide occupies residues 1 to 22; that stretch reads MQMKATILIVLVALFMIQQSEA. At W24 the chain carries 6'-bromotryptophan. Position 26 is a 3,4-dihydroxyarginine (R26). A 4,5-dihydroxylysine mark is found at K27, K30, and K34. 2 positions are modified to 3',4'-dihydroxyphenylalanine: Y36 and Y37. Residue K38 is modified to 4,5-dihydroxylysine. The residue at position 40 (K40) is a 5-hydroxylysine. 2 positions are modified to 3',4'-dihydroxyphenylalanine: Y41 and Y42. At K44 the chain carries 5-hydroxylysine. L54 bears the Leucine amide mark. The propeptide at 56-81 is removed in mature form; sequence DMTDEEFQDFMKEVEQAREEELQSRQ.

Contains L-DOPA (3',4'-dihydroxyphenylalanine). As to expression, hemocytes and pharyngeal tissues.

The protein localises to the secreted. Bactericidal against several Gram-positive and Gram-negative bacteria. Plays a significant role in the innate immune mechanisms of S.clava. The sequence is that of Styelin-D from Styela clava (Sea squirt).